A 274-amino-acid polypeptide reads, in one-letter code: 2-succinyl-6-hydroxy-2,4-cyclohexadiene-1-carboxylate synthase (274 aa).

The protein belongs to the AB hydrolase superfamily. MenH family. Monomer.

The catalysed reaction is 5-enolpyruvoyl-6-hydroxy-2-succinyl-cyclohex-3-ene-1-carboxylate = (1R,6R)-6-hydroxy-2-succinyl-cyclohexa-2,4-diene-1-carboxylate + pyruvate. It functions in the pathway quinol/quinone metabolism; 1,4-dihydroxy-2-naphthoate biosynthesis; 1,4-dihydroxy-2-naphthoate from chorismate: step 3/7. Its pathway is quinol/quinone metabolism; menaquinone biosynthesis. Catalyzes a proton abstraction reaction that results in 2,5-elimination of pyruvate from 2-succinyl-5-enolpyruvyl-6-hydroxy-3-cyclohexene-1-carboxylate (SEPHCHC) and the formation of 2-succinyl-6-hydroxy-2,4-cyclohexadiene-1-carboxylate (SHCHC). The sequence is that of 2-succinyl-6-hydroxy-2,4-cyclohexadiene-1-carboxylate synthase from Yersinia enterocolitica serotype O:8 / biotype 1B (strain NCTC 13174 / 8081).